The sequence spans 884 residues: MEPSNTQKEDLPTAFNGIKSQLNSILKSNQLFQDYALLNGFLAFVHSKLNAAILTSIESQCGKSFAADLDSFDQSSISSILDFSWESVHYPIFKWFQMWRNYILFEKENKKQQTKFIDFRKMNSKMLKFFKTVQNFYVNVINTVYKKYDISVLLPKRIIQDLKLSDIENTTNVGDILAVKTFNSSSPLAHLIPTLFHRCLLFLGTAYRYKTLLEEISNKYSISNFKKSLDFFRLASLVLPSAGETYSQAGAIFLQTGNLGIAVFNFVKGMMTKMPSPVSIKNFGALMVDNKSSLNRSLHTTIMNTYLQESKGPRTPAKEILEFYFLGLFGSVWSPTSWRDDTKPNQLNNGIKLRHLENALYETMSARYLNNIKTIFHNLIITIGGFHLLLKRRSDVSAKTLKDLRSNELDYLNFAFKYIAHILNDIVKESWSENPEVSEILGMVRIINCWIKANPMVLQYSQSNLEFVNALAYLINDIVKKKPSPSFSITEHIPKRTYWFEEDLMVKGLSFVNFQLSDFDDYEKILEMDHSLDRLIGNPPLCDKLSASSEMLLRLQAVVNISSQLLQNNNCGVEWSDNKSRYIFNKKIGFKETVKNSMKTSKQSNEKAKLQRKNKPSTTNGSISMADLERQMRSSSLDSFSPTMGYSGSSVPMAPDTFNVKPSGTITGNKVNVELLKIELSGQNADGAITNISPGYSNAAISSSNSTDESSFDLNNILSSMQQKHAEKSFAKSMQGVNEQIPANDVCHQAQRPMQGGLYSSQQPSSMSSLNSAYQNASMPPSASMVSYPYPFLNQQGQGVFPPYNAQNLQWQSEAYSLKSMNFANPTWLGDQYQTSAPSSAYAQAQRQMFQQPMQQDVGKYMQFPFDAQSNTDSMRGNSRNNMF.

2 disordered regions span residues asparagine 596 to glycine 645 and glutamine 755 to tyrosine 774. Residues arginine 633–glycine 645 are compositionally biased toward polar residues. Low complexity predominate over residues serine 760–serine 772.

It belongs to the EST1 family. As to quaternary structure, interacts with NMD helicase UPF1. Interacts with CDC33.

The protein resides in the nucleus. It is found in the chromosome. The protein localises to the telomere. It localises to the cytoplasm. Its subcellular location is the P-body. Its function is as follows. Plays a role in nonsense-mediated mRNA decay (NMD). Recruits UPF1 to cytoplasmic mRNA decay bodies (P-bodies). Negative regulator of gene expression. Inhibits translation most likely through effects on eIF-4E (CDC33). Involved in telomere maintenance. This is Nonsense-mediated mRNA decay factor EBS1 from Saccharomyces cerevisiae (strain ATCC 204508 / S288c) (Baker's yeast).